A 636-amino-acid chain; its full sequence is MNSNSTIGRTTLGESDTISLSFSEPSSSLNSRSTDVVFASTSTLVPQQGSLTSLPPVSSTATPTYYSTSLTYDETLHTSIDVSSTSTLVSSTDSSSSSEQDTYSSQYDPATSSYSIITPSMSIFSSTSPMSSSSSITSEWSSLTSTTPTLSXSATSLSSSWSSLSSPSSLLVSSSLSLSLSSSYSDTKLFSFDSRSSIFSPSTPTVISPSYTYLSSISATSFQISTTSELSXSWFSTISSPSTTSNKDTTFPSSSRNTSTSFYSSSLSSTNDFSTISKSSKLSPSASSSTVSISTISVPTSSSVSSSSSKVPSNRPSSSSSSDDTTSAYSSTYTFQSLQSTTSSSIPPXTQTPSTSTISTSPIPTSSQVFNTXAISSSEDSKTIYYFYTQTYDITDSSTTFVTGLPTTIAVAKSEVTSFSAPSSTITADMSFYQHWLDGSLDNNKNQGTSKTNTGTIVGSVVGSVGGILICVLVVWFMLVRKRKAKRHFKENDSFCHEIGRRTGFPTTAQAKEASLQAQDSGSQQRNTETASANNPFSNEFNFKARGNPPPVPPPRNVTAXNGSFQNMRSNFMDQENRFSYGSSFTYSSLGSSTQGGFSTLSSNSIRLGXGLDNDISHDERNTVQNNSQGFLREII.

Positions Met-1–Ile-18 are enriched in polar residues. Disordered regions lie at residues Met-1–Arg-32, Thr-87–Pro-109, Thr-237–Asn-271, Pro-299–Thr-326, and Gln-339–Ile-363. Residue Asn-4 is glycosylated (N-linked (GlcNAc...) asparagine). Composition is skewed to low complexity over residues Ser-19–Arg-32 and Thr-87–Asp-108. N-linked (GlcNAc...) asparagine glycosylation occurs at Asn-257. A helical membrane pass occupies residues Ile-457–Phe-477. A glycan (N-linked (GlcNAc...) asparagine) is linked at Asn-492. Residues Gln-510 to Phe-541 are compositionally biased toward polar residues. The interval Gln-510–Pro-553 is disordered. Residue Lys-512 forms a Glycyl lysine isopeptide (Lys-Gly) (interchain with G-Cter in ubiquitin) linkage. Residues Asn-557, Asn-562, and Asn-626 are each glycosylated (N-linked (GlcNAc...) asparagine). Phosphoserine is present on Ser-628.

The protein belongs to the TDA7 family.

It localises to the vacuole membrane. The chain is Topoisomerase I damage affected protein 7 (TDA7) from Saccharomyces cerevisiae (strain FostersO) (Baker's yeast).